The following is a 718-amino-acid chain: Catalase-peroxidase (718 aa).

The disordered stretch occupies residues methionine 1 to arginine 24. Positions tryptophan 95–tyrosine 217 form a cross-link, tryptophyl-tyrosyl-methioninium (Trp-Tyr) (with M-243). Histidine 96 functions as the Proton acceptor in the catalytic mechanism. A cross-link (tryptophyl-tyrosyl-methioninium (Tyr-Met) (with W-95)) is located at residues tyrosine 217–methionine 243. Histidine 258 provides a ligand contact to heme b.

The protein belongs to the peroxidase family. Peroxidase/catalase subfamily. In terms of assembly, homodimer or homotetramer. It depends on heme b as a cofactor. Post-translationally, formation of the three residue Trp-Tyr-Met cross-link is important for the catalase, but not the peroxidase activity of the enzyme.

The catalysed reaction is H2O2 + AH2 = A + 2 H2O. The enzyme catalyses 2 H2O2 = O2 + 2 H2O. Its function is as follows. Bifunctional enzyme with both catalase and broad-spectrum peroxidase activity. This Sinorhizobium fredii (strain NBRC 101917 / NGR234) protein is Catalase-peroxidase.